Reading from the N-terminus, the 143-residue chain is Putative transmembrane protein ORF32 (143 aa).

2 helical membrane passes run Gly-20 to Leu-42 and Trp-52 to Val-74.

The protein resides in the host membrane. The sequence is that of Putative transmembrane protein ORF32 from Haloarcula hispanica (His1V).